The chain runs to 660 residues: Leucine-rich repeat transmembrane protein FLRT2 (660 aa).

Positions 1–35 (MGLQTTKWPSHGAFFLKSWLIISLGLYSQVSKLLA) are cleaved as a signal peptide. Disulfide bonds link cysteine 36-cysteine 42 and cysteine 40-cysteine 49. The region spanning 36-63 (CPSVCRCDRNFVYCNERSLTSVPLGIPE) is the LRRNT domain. At 36 to 541 (CPSVCRCDRN…TTSHSMGSPF (506 aa)) the chain is on the extracellular side. 10 LRR repeats span residues 64–85 (GVTV…AELH), 89–109 (SVHT…NLPK), 110–131 (NVRV…ALAQ), 134–155 (KLEE…DGAF), 160–181 (SLKL…LPVD), 182–202 (LQEL…AFQN), 205–225 (SLER…AEGT), 231–252 (KLKE…LPGT), 253–274 (HLIR…AFSN), and 277–298 (KLER…VFDN). An N-linked (GlcNAc...) asparagine glycan is attached at asparagine 202. A glycan (N-linked (GlcNAc...) asparagine) is linked at asparagine 298. The region spanning 310–362 (NPWFCDCSIKWVTEWLKYIPSSLNVRGFMCQGPEQVRGMAVRELNMNLLSCPT) is the LRRCT domain. 2 disulfide bridges follow: cysteine 314–cysteine 339 and cysteine 316–cysteine 360. Residues 373–409 (APSTASPTTQPPTLSIPNPSRSYTPPTPTTSKLPTIP) are compositionally biased toward low complexity. The interval 373–413 (APSTASPTTQPPTLSIPNPSRSYTPPTPTTSKLPTIPDWDG) is disordered. A Fibronectin type-III domain is found at 419–517 (PPISERIQLS…ICSEATTHAS (99 aa)). N-linked (GlcNAc...) asparagine glycans are attached at residues asparagine 433 and asparagine 521. The helical transmembrane segment at 542–562 (LLAGLIGGAVIFVLVVLLSVF) threads the bilayer. Over 563-660 (CWHMHKKGRY…SVPDLEHCHT (98 aa)) the chain is Cytoplasmic.

Self-associates (via leucine-rich repeats), giving rise to homooligomers. Interacts with FGFR1. Interacts with FGFR2. Interacts (via extracellular domain) with ADGRL1/LPHN1. Interacts (via extracellular domain) with ADGRL3 (via olfactomedin-like domain). Interacts (via extracellular domain) with UNC5D (via the first Ig-like domain). Can also interact (via extracellular domain) with UNC5B, but with much lower affinity. Interacts (via extracellular domain) with FN1. N-glycosylated. In terms of processing, proteolytic cleavage in the juxtamembrane region gives rise to a soluble ectodomain. Cleavage is probably effected by a metalloprotease. As to expression, expressed in pancreas, skeletal muscle, brain, and heart.

The protein resides in the cell membrane. It is found in the endoplasmic reticulum membrane. It localises to the cell junction. The protein localises to the focal adhesion. Its subcellular location is the secreted. The protein resides in the extracellular space. It is found in the extracellular matrix. It localises to the microsome membrane. The protein localises to the synapse. Its subcellular location is the synaptosome. Its function is as follows. Functions in cell-cell adhesion, cell migration and axon guidance. Mediates cell-cell adhesion via its interactions with ADGRL3 and probably also other latrophilins that are expressed at the surface of adjacent cells. May play a role in the migration of cortical neurons during brain development via its interaction with UNC5D. Mediates axon growth cone collapse and plays a repulsive role in neuron guidance via its interaction with UNC5D, and possibly also other UNC-5 family members. Plays a role in fibroblast growth factor-mediated signaling cascades. Required for normal organization of the cardiac basement membrane during embryogenesis, and for normal embryonic epicardium and heart morphogenesis. In Homo sapiens (Human), this protein is Leucine-rich repeat transmembrane protein FLRT2 (FLRT2).